A 370-amino-acid chain; its full sequence is DNA primase large subunit PriL (370 aa).

The [4Fe-4S] cluster site is built by C268, C341, C350, and C354.

Belongs to the eukaryotic-type primase large subunit family. In terms of assembly, heterodimer of a small subunit (PriS) and a large subunit (PriL). The cofactor is [4Fe-4S] cluster.

In terms of biological role, regulatory subunit of DNA primase, an RNA polymerase that catalyzes the synthesis of short RNA molecules used as primers for DNA polymerase during DNA replication. Stabilizes and modulates the activity of the small subunit, increasing the rate of DNA synthesis, and conferring RNA synthesis capability. The DNA polymerase activity may enable DNA primase to also catalyze primer extension after primer synthesis. May also play a role in DNA repair. This is DNA primase large subunit PriL from Archaeoglobus fulgidus (strain ATCC 49558 / DSM 4304 / JCM 9628 / NBRC 100126 / VC-16).